The following is a 189-amino-acid chain: Protein GrpE (189 aa).

The tract at residues 1-37 (MSDSSKEKKKKFADMVSRQKGDDQQSDNHKQTDDLNE) is disordered. Positions 17 to 33 (SRQKGDDQQSDNHKQTD) are enriched in basic and acidic residues.

It belongs to the GrpE family. Homodimer.

The protein localises to the cytoplasm. Participates actively in the response to hyperosmotic and heat shock by preventing the aggregation of stress-denatured proteins, in association with DnaK and GrpE. It is the nucleotide exchange factor for DnaK and may function as a thermosensor. Unfolded proteins bind initially to DnaJ; upon interaction with the DnaJ-bound protein, DnaK hydrolyzes its bound ATP, resulting in the formation of a stable complex. GrpE releases ADP from DnaK; ATP binding to DnaK triggers the release of the substrate protein, thus completing the reaction cycle. Several rounds of ATP-dependent interactions between DnaJ, DnaK and GrpE are required for fully efficient folding. The protein is Protein GrpE of Wolbachia pipientis wMel.